Here is a 748-residue protein sequence, read N- to C-terminus: Formate acetyltransferase (748 aa).

The 614-residue stretch at 5–618 (NNHTNAWQGF…KTGNTPDGRK (614 aa)) folds into the PFL domain. C412 acts as the S-acetylcysteine intermediate in catalysis. Residue C413 is the Cysteine radical intermediate of the active site. A Glycine radical domain is found at 625 to 748 (PGANPMHGRD…VISRTFHESM (124 aa)). The residue at position 723 (G723) is a Glycine radical.

This sequence belongs to the glycyl radical enzyme (GRE) family. PFL subfamily. Homodimer.

Its subcellular location is the cytoplasm. It catalyses the reaction formate + acetyl-CoA = pyruvate + CoA. It participates in fermentation; pyruvate fermentation; formate from pyruvate: step 1/1. Functionally, catalyzes the conversion of pyruvate to formate and acetyl-CoA. The sequence is that of Formate acetyltransferase (pflB) from Staphylococcus epidermidis (strain ATCC 35984 / DSM 28319 / BCRC 17069 / CCUG 31568 / BM 3577 / RP62A).